Reading from the N-terminus, the 66-residue chain is Conotoxin Cl14.1a (66 aa).

The N-terminal stretch at 1–19 is a signal peptide; sequence MNVTAMFIVLLLTMPLTDG. A propeptide spanning residues 20–49 is cleaved from the precursor; sequence FNIRAINGGELFGLVQRDAGNALDHGFYRR.

Belongs to the conotoxin L superfamily. Post-translationally, contains 2 disulfide bonds. In terms of tissue distribution, expressed by the venom duct.

It is found in the secreted. Probable neurotoxin with unknown target. Possibly targets ion channels. This peptide could be considered as an apoptosis activator in some cancers (tested on lung and breast cancer cell lines). Provokes the decrease of H1299 lung cancer cells viability after 24 hours treatment, and induces a high Bax/Bcl-2 ratio, which suggests that this peptide can activate apoptosis in H1299 cells. In addition, H1299 and H1437 lung cancer cell lines treated with this peptide have decreased cell viability, activated caspases, and reduced expression of the pro-survival protein NF-kappa-B (NFKB1), indicating activation of apoptosis. In synergy with MicroRNA-101-3p, this synthetic peptide inhibits breast cancer cells (SK-BR-3 and MCF-7) migration, invasion, and proliferation through suppressing the expression of the methyltransferase EZH2. In parallel, this synergy treatment is able to promote the apoptosis of breast cancer cells. Against microbes, this synthetic toxin (at micromolar concentrations) lowers viability and inhibits host cell invasion by the opportunistic parasite Toxoplasma gondii (tachyzoite form). In addition, it permits T.gondii intracellular replication to decrease while viability of the host cell is unaffected. The protein is Conotoxin Cl14.1a of Californiconus californicus (California cone).